The primary structure comprises 253 residues: Glutamate racemase (253 aa).

Substrate is bound by residues aspartate 7–serine 8 and tyrosine 39–glycine 40. The Proton donor/acceptor role is filled by cysteine 70. Asparagine 71–serine 72 is a substrate binding site. Cysteine 179 serves as the catalytic Proton donor/acceptor. Position 180–181 (threonine 180–histidine 181) interacts with substrate.

Belongs to the aspartate/glutamate racemases family.

The catalysed reaction is L-glutamate = D-glutamate. The protein operates within cell wall biogenesis; peptidoglycan biosynthesis. Provides the (R)-glutamate required for cell wall biosynthesis. This is Glutamate racemase from Nitratiruptor sp. (strain SB155-2).